The primary structure comprises 556 residues: 2-succinyl-5-enolpyruvyl-6-hydroxy-3-cyclohexene-1-carboxylate synthase (556 aa).

This sequence belongs to the TPP enzyme family. MenD subfamily. In terms of assembly, homodimer. Mg(2+) serves as cofactor. Mn(2+) is required as a cofactor. The cofactor is thiamine diphosphate.

It catalyses the reaction isochorismate + 2-oxoglutarate + H(+) = 5-enolpyruvoyl-6-hydroxy-2-succinyl-cyclohex-3-ene-1-carboxylate + CO2. The protein operates within quinol/quinone metabolism; 1,4-dihydroxy-2-naphthoate biosynthesis; 1,4-dihydroxy-2-naphthoate from chorismate: step 2/7. It functions in the pathway quinol/quinone metabolism; menaquinone biosynthesis. Its function is as follows. Catalyzes the thiamine diphosphate-dependent decarboxylation of 2-oxoglutarate and the subsequent addition of the resulting succinic semialdehyde-thiamine pyrophosphate anion to isochorismate to yield 2-succinyl-5-enolpyruvyl-6-hydroxy-3-cyclohexene-1-carboxylate (SEPHCHC). The protein is 2-succinyl-5-enolpyruvyl-6-hydroxy-3-cyclohexene-1-carboxylate synthase of Escherichia coli O157:H7.